The primary structure comprises 920 residues: Phosphoenolpyruvate carboxylase (920 aa).

Catalysis depends on residues histidine 138 and lysine 583.

Belongs to the PEPCase type 1 family. Mg(2+) serves as cofactor.

The enzyme catalyses oxaloacetate + phosphate = phosphoenolpyruvate + hydrogencarbonate. In terms of biological role, forms oxaloacetate, a four-carbon dicarboxylic acid source for the tricarboxylic acid cycle. The sequence is that of Phosphoenolpyruvate carboxylase from Streptococcus pyogenes serotype M5 (strain Manfredo).